We begin with the raw amino-acid sequence, 364 residues long: Nucleosome assembly protein 1;2 (364 aa).

Residues 32–86 (VESIKNTLQGLAARHTDVLESLEPKVRKRVEVLREIQSQHDDLEAKFFEERAALE) adopt a coiled-coil conformation. Residues 53 to 68 (LEPKVRKRVEVLREIQ) carry the Nuclear export signal motif. Positions 227–232 (KKKPKK) match the Nuclear localization signal motif. Disordered stretches follow at residues 250-269 (FNFF…DEDT) and 301-364 (GEAA…CKQQ). 2 stretches are compositionally biased toward acidic residues: residues 259–269 (PDDDEEIDEDT) and 304–340 (AQDE…DDED). At C361 the chain carries Cysteine methyl ester. Residue C361 is the site of S-farnesyl cysteine attachment. Positions 362–364 (KQQ) are cleaved as a propeptide — removed in mature form.

The protein belongs to the nucleosome assembly protein (NAP) family.

Its subcellular location is the nucleus. The protein resides in the cytoplasm. May modulate chromatin structure by regulation of nucleosome assembly/disassembly. The chain is Nucleosome assembly protein 1;2 (NAP1;2) from Oryza sativa subsp. japonica (Rice).